A 97-amino-acid polypeptide reads, in one-letter code: Aspartyl/glutamyl-tRNA(Asn/Gln) amidotransferase subunit C (97 aa).

The protein belongs to the GatC family. Heterotrimer of A, B and C subunits.

The catalysed reaction is L-glutamyl-tRNA(Gln) + L-glutamine + ATP + H2O = L-glutaminyl-tRNA(Gln) + L-glutamate + ADP + phosphate + H(+). The enzyme catalyses L-aspartyl-tRNA(Asn) + L-glutamine + ATP + H2O = L-asparaginyl-tRNA(Asn) + L-glutamate + ADP + phosphate + 2 H(+). In terms of biological role, allows the formation of correctly charged Asn-tRNA(Asn) or Gln-tRNA(Gln) through the transamidation of misacylated Asp-tRNA(Asn) or Glu-tRNA(Gln) in organisms which lack either or both of asparaginyl-tRNA or glutaminyl-tRNA synthetases. The reaction takes place in the presence of glutamine and ATP through an activated phospho-Asp-tRNA(Asn) or phospho-Glu-tRNA(Gln). This chain is Aspartyl/glutamyl-tRNA(Asn/Gln) amidotransferase subunit C, found in Prochlorococcus marinus (strain MIT 9313).